Here is a 371-residue protein sequence, read N- to C-terminus: Cytochrome b (371 aa).

Helical transmembrane passes span 25-45 (FGSMLLTCLALQVLTGFFLAV), 69-90 (WMMQNLHAIGASMFFICIYIHI), 105-125 (WMSGITLLITLMATAFFGYVL), and 170-190 (FFALHFILPFEIISLSSLHII). Heme b is bound by residues His-75 and His-89. Heme b-binding residues include His-174 and His-188. His-193 lines the a ubiquinone pocket. A run of 4 helical transmembrane segments spans residues 218-238 (HKDLLLLTLMILLLFITMSFF), 280-300 (LGGALALVTSIMILFTIPFTH), 312-332 (LSQLMFWTLVSTFITITWAAT), and 339-358 (FIIISQATSLLYFTFFLSFP).

The protein belongs to the cytochrome b family. The cytochrome bc1 complex contains 3 respiratory subunits (MT-CYB, CYC1 and UQCRFS1), 2 core proteins (UQCRC1 and UQCRC2) and probably 6 low-molecular weight proteins. The cofactor is heme b.

The protein localises to the mitochondrion inner membrane. Functionally, component of the ubiquinol-cytochrome c reductase complex (complex III or cytochrome b-c1 complex) that is part of the mitochondrial respiratory chain. The b-c1 complex mediates electron transfer from ubiquinol to cytochrome c. Contributes to the generation of a proton gradient across the mitochondrial membrane that is then used for ATP synthesis. The protein is Cytochrome b (MT-CYB) of Apodora papuana (Papuan olive python).